The primary structure comprises 89 residues: Small ribosomal subunit protein uS17 (89 aa).

This sequence belongs to the universal ribosomal protein uS17 family. Part of the 30S ribosomal subunit.

Its function is as follows. One of the primary rRNA binding proteins, it binds specifically to the 5'-end of 16S ribosomal RNA. The polypeptide is Small ribosomal subunit protein uS17 (Xanthomonas axonopodis pv. citri (strain 306)).